Reading from the N-terminus, the 723-residue chain is Nucleolar protein 11 (723 aa).

It localises to the nucleus. Its subcellular location is the nucleolus. In terms of biological role, ribosome biogenesis factor. May be required for both optimal rDNA transcription and pre-rRNA processing. The protein is Nucleolar protein 11 (NOL11) of Gallus gallus (Chicken).